A 379-amino-acid polypeptide reads, in one-letter code: GDSL esterase/lipase At3g05180 (379 aa).

A signal peptide spans 1–27; sequence METLFHTLLRLLLFVAISHTLSPLAGS. S43 functions as the Nucleophile in the catalytic mechanism. N-linked (GlcNAc...) asparagine glycosylation is found at N294 and N330. Catalysis depends on residues D349 and H352.

Belongs to the 'GDSL' lipolytic enzyme family.

Its subcellular location is the secreted. The chain is GDSL esterase/lipase At3g05180 from Arabidopsis thaliana (Mouse-ear cress).